The chain runs to 389 residues: Arrestin-C (389 aa).

Residues 369–389 (AQQEPSGESQEALAAEGNEGS) are disordered.

The protein belongs to the arrestin family. Homodimer; disulfide-linked in response to retinal illumination. Interacts with CXCR4; the interaction is dependent on the C-terminal phosphorylation of CXCR4 and modulates the calcium ion mobilization activity of CXCR4. Interacts with GPR84. In terms of tissue distribution, expressed in cone photoreceptors in the retina (at protein level).

Its subcellular location is the photoreceptor inner segment. The protein localises to the cell projection. It localises to the cilium. The protein resides in the photoreceptor outer segment. In terms of biological role, may play a role in an as yet undefined retina-specific signal transduction. Could bind to photoactivated-phosphorylated red/green opsins. This is Arrestin-C (ARR3) from Bos taurus (Bovine).